We begin with the raw amino-acid sequence, 272 residues long: Rhomboid-type serine protease B (272 aa).

6 consecutive transmembrane segments (helical) span residues 30–50 (LVLL…WSVV), 72–92 (PFIH…TPLL), 103–123 (TAVA…YILV), 133–153 (AVVG…IKTF), 164–184 (TKIP…IFVP), and 186–206 (TSFL…LGYL). The active-site Nucleophile is the Ser-138. The active site involves His-191.

It belongs to the peptidase S54 family.

The protein resides in the membrane. The catalysed reaction is Cleaves type-1 transmembrane domains using a catalytic dyad composed of serine and histidine that are contributed by different transmembrane domains.. Its function is as follows. Rhomboid protease that catalyzes intramembrane proteolysis. Required for transcription factor srbA activation by mediating its release from the membrane and thereby regulating its activity under hypoxic conditions. Essential for iron homeostasis and resistance to azoles such as voriconazole. Required for virulence in murine models of invasive pulmonary aspergillosis (IPA). This Aspergillus fumigatus (strain ATCC MYA-4609 / CBS 101355 / FGSC A1100 / Af293) (Neosartorya fumigata) protein is Rhomboid-type serine protease B.